The primary structure comprises 397 residues: Lysophospholipid transporter LplT (397 aa).

Residues 1-17 (MSESVHTNTSLWSKGMK) lie on the Periplasmic side of the membrane. The helical transmembrane segment at 18–38 (AVIVAQFLSAFGDNALLFATL) threads the bilayer. At 39–52 (ALLKAQFYPEWSQP) the chain is on the cytoplasmic side. Residues 53 to 73 (VLQMVFVGAYILFAPFVGQVA) form a helical membrane-spanning segment. Residues 74–90 (DSFAKGRVMMFANGLKL) are Periplasmic-facing. Residues 91-111 (LGAASICFGFNPFVGYTLVGI) form a helical membrane-spanning segment. Residues 112-144 (GAAAYSPAKYGILGELTTGDKLVKANGLMEAST) lie on the Cytoplasmic side of the membrane. The helical transmembrane segment at 145 to 165 (IAAILLGSVAGGVLADLHVLV) threads the bilayer. Position 166 (Ala166) is a topological domain, periplasmic. The chain crosses the membrane as a helical span at residues 167-187 (LAACALAYAGAVAANIYIPKL). Topologically, residues 188–226 (AAARPGQSWNVLKMTCSFKSACTSLWQNGETRFSLVGTS) are cytoplasmic. The chain crosses the membrane as a helical span at residues 227–247 (LFWGAGVTLRFLLVLWVPVAL). Topologically, residues 248–256 (GITDNATPT) are periplasmic. A helical membrane pass occupies residues 257–277 (YLNAMVAIGIVLGAGAAAKLV). Topologically, residues 278–280 (TLE) are cytoplasmic. A helical transmembrane segment spans residues 281-301 (TVSRCMPAGILIGVVVLFFSL). Topologically, residues 302–304 (QHE) are periplasmic. The chain crosses the membrane as a helical span at residues 305 to 325 (LLPAYALLMLIGVLGGFFVVP). Over 326–343 (LNALLQERGKKSVGAGNA) the chain is Cytoplasmic. A helical membrane pass occupies residues 344-364 (IAVQNLGENSAMLLMLGIYSL). At 365–366 (AV) the chain is on the periplasmic side. A helical membrane pass occupies residues 367-387 (LVGIPVVPIGIGFGTLFALAI). At 388 to 397 (TALWIWQRRH) the chain is on the cytoplasmic side.

The protein belongs to the major facilitator superfamily. LplT (TC 2.A.1.42) family.

The protein localises to the cell inner membrane. Its function is as follows. Catalyzes the facilitated diffusion of 2-acyl-glycero-3-phosphoethanolamine (2-acyl-GPE) into the cell. The sequence is that of Lysophospholipid transporter LplT from Escherichia fergusonii (strain ATCC 35469 / DSM 13698 / CCUG 18766 / IAM 14443 / JCM 21226 / LMG 7866 / NBRC 102419 / NCTC 12128 / CDC 0568-73).